Consider the following 103-residue polypeptide: Phosphoribosyl-ATP pyrophosphatase (103 aa).

The protein belongs to the PRA-PH family.

Its subcellular location is the cytoplasm. It carries out the reaction 1-(5-phospho-beta-D-ribosyl)-ATP + H2O = 1-(5-phospho-beta-D-ribosyl)-5'-AMP + diphosphate + H(+). It participates in amino-acid biosynthesis; L-histidine biosynthesis; L-histidine from 5-phospho-alpha-D-ribose 1-diphosphate: step 2/9. The sequence is that of Phosphoribosyl-ATP pyrophosphatase from Listeria monocytogenes serotype 4a (strain HCC23).